The primary structure comprises 581 residues: Adenine deaminase (581 aa).

Belongs to the metallo-dependent hydrolases superfamily. Adenine deaminase family. Requires Mn(2+) as cofactor.

It catalyses the reaction adenine + H2O + H(+) = hypoxanthine + NH4(+). The protein is Adenine deaminase of Brucella melitensis biotype 1 (strain ATCC 23456 / CCUG 17765 / NCTC 10094 / 16M).